A 338-amino-acid polypeptide reads, in one-letter code: Large ribosomal subunit protein uL10 (338 aa).

Over residues 298–308 (AAQQTQTQQST) the composition is skewed to low complexity. A disordered region spans residues 298-338 (AAQQTQTQQSTAEEKKEEKKEEEKKGPSEEEIGSGLASLFG). Residues 309–325 (AEEKKEEKKEEEKKGPS) show a composition bias toward basic and acidic residues.

It belongs to the universal ribosomal protein uL10 family. Part of the 50S ribosomal subunit. Forms part of the ribosomal stalk which helps the ribosome interact with GTP-bound translation factors. Forms a heptameric L10(L12)2(L12)2(L12)2 complex, where L10 forms an elongated spine to which the L12 dimers bind in a sequential fashion.

Forms part of the ribosomal stalk, playing a central role in the interaction of the ribosome with GTP-bound translation factors. This is Large ribosomal subunit protein uL10 from Saccharolobus islandicus (strain M.16.27) (Sulfolobus islandicus).